Consider the following 374-residue polypeptide: 4-hydroxybenzoate polyprenyltransferase, mitochondrial (374 aa).

The N-terminal 63 residues, 1-63, are a transit peptide targeting the mitochondrion; it reads MLRLGGAGLV…RALSLSAAAV (63 aa). Over 64–83 the chain is Mitochondrial matrix; the sequence is VNSAPRPLQPYLRLMRLDKP. Residues 84–104 form a helical membrane-spanning segment; sequence IGTWLLYLPCTWSIGLAADPG. Residues 105-108 are Mitochondrial intermembrane-facing; sequence CFPD. A helical transmembrane segment spans residues 109–129; it reads WYMLSLFGTGAILMRGAGCTI. The Mitochondrial matrix portion of the chain corresponds to 130–153; the sequence is NDMWDRDFDKKVERTANRPIAAGD. The helical transmembrane segment at 154–174 threads the bilayer; that stretch reads ISAFQSFVFLGAQLTLALGVL. Residues 175–176 are Mitochondrial intermembrane-facing; it reads LH. The chain crosses the membrane as a helical span at residues 177–197; it reads LNYYSIAMGAASLLLVVTYPL. At 198–200 the chain is on the mitochondrial matrix side; it reads MKR. Residues 201–221 form a helical membrane-spanning segment; the sequence is VTFWPQLALGLTFNWGALLGW. The Mitochondrial intermembrane portion of the chain corresponds to 222 to 230; the sequence is SAVKGSCDP. Residues 231–251 traverse the membrane as a helical segment; that stretch reads AVCLPLYFSGVMWTLIYDTIY. Over 252 to 277 the chain is Mitochondrial matrix; the sequence is AHQDKKDDALIGLKSTALLFRENTKQ. Residues 278–298 form a helical membrane-spanning segment; that stretch reads WLSGFGVAMVGALSLVGASSG. Topologically, residues 299–300 are mitochondrial intermembrane; the sequence is QT. Residues 301 to 321 traverse the membrane as a helical segment; it reads LPYYAAVAAVGAHLAHQIYTV. The Mitochondrial matrix segment spans residues 322–332; it reads DIHRAEDCWEK. A helical membrane pass occupies residues 333–353; it reads FTSNRTVGLLLFLGIVLGNLY. Residues 354–374 lie on the Mitochondrial intermembrane side of the membrane; it reads KDKPDETKGVDAVGEESERTS.

The protein belongs to the UbiA prenyltransferase family. Mg(2+) serves as cofactor.

Its subcellular location is the mitochondrion inner membrane. It catalyses the reaction an all-trans-polyprenyl diphosphate + 4-hydroxybenzoate = a 4-hydroxy-3-(all-trans-polyprenyl)benzoate + diphosphate. It carries out the reaction all-trans-decaprenyl diphosphate + 4-hydroxybenzoate = 4-hydroxy-3-(all-trans-decaprenyl)benzoate + diphosphate. The catalysed reaction is all-trans-nonaprenyl diphosphate + 4-hydroxybenzoate = 4-hydroxy-3-(all-trans-nonaprenyl)benzoate + diphosphate. It functions in the pathway cofactor biosynthesis; ubiquinone biosynthesis. Mediates the second step in the final reaction sequence of coenzyme Q (CoQ) biosynthesis. Catalyzes the prenylation of para-hydroxybenzoate (PHB) with an all-trans polyprenyl group (such as all-trans-nonaprenyl diphosphate). The length of the polyprenyl side chain varies depending on the species, in humans, the side chain is comprised of 10 isoprenyls producing CoQ10 (also known as ubiquinone), whereas rodents predominantly generate CoQ9. However, this specificity is not complete, human tissues have low amounts of CoQ9 and rodent organs contain some CoQ10. Plays a central role in the biosynthesis of CoQ9. CoQ9 is a vital molecule that transports electrons from mitochondrial respiratory chain complexes. CoQs also function as cofactors for uncoupling protein and plays a role as regulator of the extracellularly-induced ceramide-dependent apoptotic pathway. Regulates mitochondrial permeability transition pore (mPTP) opening and ROS production (pivotal events in cell death) in a tissue specific manner. The polypeptide is 4-hydroxybenzoate polyprenyltransferase, mitochondrial (Rattus norvegicus (Rat)).